We begin with the raw amino-acid sequence, 179 residues long: ATP synthase subunit delta (179 aa).

The protein belongs to the ATPase delta chain family. F-type ATPases have 2 components, F(1) - the catalytic core - and F(0) - the membrane proton channel. F(1) has five subunits: alpha(3), beta(3), gamma(1), delta(1), epsilon(1). F(0) has three main subunits: a(1), b(2) and c(10-14). The alpha and beta chains form an alternating ring which encloses part of the gamma chain. F(1) is attached to F(0) by a central stalk formed by the gamma and epsilon chains, while a peripheral stalk is formed by the delta and b chains.

The protein localises to the cell inner membrane. Functionally, f(1)F(0) ATP synthase produces ATP from ADP in the presence of a proton or sodium gradient. F-type ATPases consist of two structural domains, F(1) containing the extramembraneous catalytic core and F(0) containing the membrane proton channel, linked together by a central stalk and a peripheral stalk. During catalysis, ATP synthesis in the catalytic domain of F(1) is coupled via a rotary mechanism of the central stalk subunits to proton translocation. Its function is as follows. This protein is part of the stalk that links CF(0) to CF(1). It either transmits conformational changes from CF(0) to CF(1) or is implicated in proton conduction. This is ATP synthase subunit delta from Burkholderia multivorans (strain ATCC 17616 / 249).